The primary structure comprises 100 residues: Urease subunit gamma (100 aa).

This sequence belongs to the urease gamma subunit family. Heterotrimer of UreA (gamma), UreB (beta) and UreC (alpha) subunits. Three heterotrimers associate to form the active enzyme.

It is found in the cytoplasm. It carries out the reaction urea + 2 H2O + H(+) = hydrogencarbonate + 2 NH4(+). The protein operates within nitrogen metabolism; urea degradation; CO(2) and NH(3) from urea (urease route): step 1/1. The protein is Urease subunit gamma of Alkalilimnicola ehrlichii (strain ATCC BAA-1101 / DSM 17681 / MLHE-1).